The primary structure comprises 618 residues: Serine/threonine-protein kinase pkn1 (618 aa).

Residues 15-381 form the Protein kinase domain; sequence YKILCYLRKG…KEEVKPQPLF (367 aa). ATP is bound by residues 21–29 and K44; that span reads LRKGLWCQD.

It belongs to the protein kinase superfamily. Ser/Thr protein kinase family. Autophosphorylated on serine and threonine residues.

The enzyme catalyses L-seryl-[protein] + ATP = O-phospho-L-seryl-[protein] + ADP + H(+). The catalysed reaction is L-threonyl-[protein] + ATP = O-phospho-L-threonyl-[protein] + ADP + H(+). Its function is as follows. Together with the serine/threonine kinase PknD, may play a role in the specific interactions with host proteins during intracellular growth. The chain is Serine/threonine-protein kinase pkn1 (pkn1) from Chlamydia caviae (strain ATCC VR-813 / DSM 19441 / 03DC25 / GPIC) (Chlamydophila caviae).